Here is a 541-residue protein sequence, read N- to C-terminus: Protein wntless homolog (541 aa).

Over 1-15 (MAGAIIENMGTKKLC) the chain is Cytoplasmic. The chain crosses the membrane as a helical span at residues 16 to 36 (IVGGILLVFQIIAFLVGGLIA). The Lumenal portion of the chain corresponds to 37-232 (PGPTTAVSYM…GIHQNGGFTK (196 aa)). Residues 101–232 (MEMSPWFQFM…GIHQNGGFTK (132 aa)) are interaction with Wnt proteins. The helical transmembrane segment at 233–253 (VWFAMKTFLTPSIFIIMVWYW) threads the bilayer. Topologically, residues 254 to 268 (RRITMMSRPPVLLEK) are cytoplasmic. A helical transmembrane segment spans residues 269 to 289 (VIFALGISMTFINIPVEWFSI). Topologically, residues 290 to 303 (GFDWTWMLLFGDIR) are lumenal. The helical transmembrane segment at 304 to 324 (QGIFYAMLLSFWIIFCGEHMM) threads the bilayer. The Cytoplasmic segment spans residues 325-331 (DQHERNH). The helical transmembrane segment at 332 to 352 (IAGYWKQVGPIAVGSFCLFIF) threads the bilayer. The Lumenal portion of the chain corresponds to 353 to 380 (DMCERGVQLTNPFYSIWTTDIGTELAMA). A helical transmembrane segment spans residues 381-401 (FIIVAGICLCLYFLFLCFMVF). At 402-431 (QVFRNISGKQSSLPAMSKVRRLHYEGLIFR) the chain is on the cytoplasmic side. Residues 432-452 (FKFLMLITLACAAMTVIFFIV) form a helical membrane-spanning segment. The Lumenal portion of the chain corresponds to 453–471 (SQVTEGHWKWGGVTVQVNS). The chain crosses the membrane as a helical span at residues 472 to 492 (AFFTGIYGMWNLYVFALMFLY). The Cytoplasmic segment spans residues 493–541 (APSHKNYGEDQSNGDLGVHSGEELQLTTTITHVDGPTEIYKLTRKEAQE).

Belongs to the wntless family. As to quaternary structure, interacts with WNT3A. Interacts with WNT1, WNT3 and WNT5A.

The protein resides in the golgi apparatus membrane. The protein localises to the cytoplasmic vesicle membrane. Its subcellular location is the cell membrane. It localises to the endoplasmic reticulum membrane. It is found in the early endosome membrane. Its function is as follows. Regulates Wnt proteins sorting and secretion in a feedback regulatory mechanism. This reciprocal interaction plays a key role in the regulation of expression, subcellular location, binding and organelle-specific association of Wnt proteins. Also plays an important role in establishment of the anterior-posterior body axis formation during development. The chain is Protein wntless homolog (WLS) from Pongo abelii (Sumatran orangutan).